Consider the following 150-residue polypeptide: MAGLPPLLLGTYTPKIDAKGRMALPAKFRSQLGQGLVMARGQERCVYLLPFDEFRRIASQIQRVSVGNKAAREYLRVFLSGAVDQQPDKQGRVLVPQMLRDYANLGSDVVVIGVGTRAELWNKDTWESYLAEKEEGYSDIADDVLPEVEF.

2 consecutive SpoVT-AbrB domains span residues 11-53 (TYTP…PFDE) and 82-125 (AVDQ…NKDT).

It belongs to the MraZ family. In terms of assembly, forms oligomers.

It is found in the cytoplasm. Its subcellular location is the nucleoid. The polypeptide is Transcriptional regulator MraZ (Bifidobacterium longum (strain NCC 2705)).